Reading from the N-terminus, the 334-residue chain is Cytochrome c551 peroxidase (334 aa).

An N-terminal signal peptide occupies residues 1–26 (MIKRTLTVSLLSLSLGAMFASAGVMA). The heme c site is built by Cys-65, Cys-68, His-69, Cys-209, Cys-212, His-213, His-270, and Met-284. A disordered region spans residues 315 to 334 (FKLPILPPSNNDTPRSQPYE). The segment covering 322–334 (PSNNDTPRSQPYE) has biased composition (polar residues).

In terms of processing, binds 2 heme c groups covalently per subunit.

The protein resides in the periplasm. The enzyme catalyses 2 Fe(II)-[cytochrome c] + H2O2 + 2 H(+) = 2 Fe(III)-[cytochrome c] + 2 H2O. The sequence is that of Cytochrome c551 peroxidase (ccp) from Nitrosomonas europaea (strain ATCC 19718 / CIP 103999 / KCTC 2705 / NBRC 14298).